We begin with the raw amino-acid sequence, 240 residues long: tRNA1(Val) (adenine(37)-N6)-methyltransferase (240 aa).

The protein belongs to the methyltransferase superfamily. tRNA (adenine-N(6)-)-methyltransferase family.

Its subcellular location is the cytoplasm. The enzyme catalyses adenosine(37) in tRNA1(Val) + S-adenosyl-L-methionine = N(6)-methyladenosine(37) in tRNA1(Val) + S-adenosyl-L-homocysteine + H(+). Functionally, specifically methylates the adenine in position 37 of tRNA(1)(Val) (anticodon cmo5UAC). This is tRNA1(Val) (adenine(37)-N6)-methyltransferase from Photobacterium profundum (strain SS9).